Consider the following 295-residue polypeptide: Light-independent protochlorophyllide reductase iron-sulfur ATP-binding protein (295 aa).

ATP is bound by residues 39–44 and lysine 68; that span reads GIGKST. A Mg(2+)-binding site is contributed by serine 43. [4Fe-4S] cluster contacts are provided by cysteine 124 and cysteine 158. Residue 209-210 coordinates ATP; it reads NR.

The protein belongs to the NifH/BchL/ChlL family. In terms of assembly, homodimer. Protochlorophyllide reductase is composed of three subunits; ChlL, ChlN and ChlB. The cofactor is [4Fe-4S] cluster.

It carries out the reaction chlorophyllide a + oxidized 2[4Fe-4S]-[ferredoxin] + 2 ADP + 2 phosphate = protochlorophyllide a + reduced 2[4Fe-4S]-[ferredoxin] + 2 ATP + 2 H2O. It participates in porphyrin-containing compound metabolism; chlorophyll biosynthesis (light-independent). Component of the dark-operative protochlorophyllide reductase (DPOR) that uses Mg-ATP and reduced ferredoxin to reduce ring D of protochlorophyllide (Pchlide) to form chlorophyllide a (Chlide). This reaction is light-independent. The L component serves as a unique electron donor to the NB-component of the complex, and binds Mg-ATP. The protein is Light-independent protochlorophyllide reductase iron-sulfur ATP-binding protein of Prochlorococcus marinus (strain AS9601).